Here is a 140-residue protein sequence, read N- to C-terminus: Lymphocyte antigen 6L (140 aa).

Residues 1–20 (MAPLLLVLWASLVSMELTGG) form the signal peptide. In terms of domain architecture, UPAR/Ly6 spans 31–124 (LSCFECFKVL…GSWEGFWSLP (94 aa)). 2 cysteine pairs are disulfide-bonded: Cys-33–Cys-50 and Cys-105–Cys-110. A lipid anchor (GPI-anchor amidated serine) is attached at Ser-116. Residues 117 to 140 (WEGFWSLPGRLLLPMGLGLFCTLL) constitute a propeptide, removed in mature form.

It is found in the cell membrane. The sequence is that of Lymphocyte antigen 6L from Mus musculus (Mouse).